Consider the following 1353-residue polypeptide: Inhibitor of Bruton tyrosine kinase (1353 aa).

ANK repeat units lie at residues 51–80 (FGRN…DLLV) and 85–114 (SGWT…SLYI). RCC1 repeat units lie at residues 141–194 (PTDV…FLSQ), 195–246 (KGQV…VLTE), and 248–301 (GCVY…LWTR). BTB domains are found at residues 564-644 (HDVT…DFLT) and 768-836 (CDVT…VVIK). An ANK 3 repeat occupies 806 to 835 (SSCAALEMPIHSDILKVILDYLYTDEAVVI). The interval 970-1001 (HSETMFKKAKTKAKKKPRKRSDSSGGYNLSDI) is disordered. A compositionally biased stretch (basic residues) spans 976 to 988 (KKAKTKAKKKPRK). At serine 990 the chain carries Phosphoserine. Over residues 992 to 1001 (SSGGYNLSDI) the composition is skewed to polar residues. Residues serine 1004, serine 1030, serine 1033, serine 1039, serine 1045, serine 1054, serine 1083, serine 1111, serine 1113, and serine 1116 each carry the phosphoserine modification. The tract at residues 1134–1155 (KCGATPKSHLGKTVSHGVKLSQ) is disordered.

Interacts with the PH domain of BTK. Isoform 2 does not interact with BTK. Expressed in DeFew, HEK293T, HeLa and in Jurkat, MC3 and NB4 lymphoid cells (at protein level). Isoform 1 is the predominant isoform expressed in all examined tissues and cell lines. Highly expressed in hemopoietic tissues (fetal liver, spleen, lymph node, thymus, peripheral blood leukocytes and bone marrow). Weakly or not expressed in other tissues.

Its subcellular location is the cytoplasm. It localises to the membrane. It is found in the nucleus. Functionally, acts as an inhibitor of BTK tyrosine kinase activity, thereby playing a role in B-cell development. Down-regulates BTK kinase activity, leading to interference with BTK-mediated calcium mobilization and NF-kappa-B-driven transcription. The chain is Inhibitor of Bruton tyrosine kinase (IBTK) from Homo sapiens (Human).